Here is a 224-residue protein sequence, read N- to C-terminus: ATP-dependent dethiobiotin synthetase BioD (224 aa).

12-17 provides a ligand contact to ATP; it reads GVGKTF. Position 16 (threonine 16) interacts with Mg(2+). The active site involves lysine 37. Threonine 41 is a substrate binding site. ATP contacts are provided by residues asparagine 52, 107–110, 167–168, 197–199, and glutamate 204; these read EGAG, GS, and PEG. Mg(2+)-binding residues include asparagine 52 and glutamate 107.

Belongs to the dethiobiotin synthetase family. In terms of assembly, homodimer. Mg(2+) is required as a cofactor.

It localises to the cytoplasm. It catalyses the reaction (7R,8S)-7,8-diammoniononanoate + CO2 + ATP = (4R,5S)-dethiobiotin + ADP + phosphate + 3 H(+). The protein operates within cofactor biosynthesis; biotin biosynthesis; biotin from 7,8-diaminononanoate: step 1/2. Its function is as follows. Catalyzes a mechanistically unusual reaction, the ATP-dependent insertion of CO2 between the N7 and N8 nitrogen atoms of 7,8-diaminopelargonic acid (DAPA, also called 7,8-diammoniononanoate) to form a ureido ring. This is ATP-dependent dethiobiotin synthetase BioD from Corynebacterium glutamicum (strain ATCC 13032 / DSM 20300 / JCM 1318 / BCRC 11384 / CCUG 27702 / LMG 3730 / NBRC 12168 / NCIMB 10025 / NRRL B-2784 / 534).